The chain runs to 1090 residues: UPF0507 protein C1Q_01007 (1090 aa).

The 148-residue stretch at 289 to 436 (FSVNQLLTDF…FEDFNKNTGN (148 aa)) folds into the VPS9 domain.

The protein belongs to the UPF0507 family.

In Saccharomyces cerevisiae (strain JAY291) (Baker's yeast), this protein is UPF0507 protein C1Q_01007.